An 84-amino-acid chain; its full sequence is UPF0248 protein PF1300 (84 aa).

Belongs to the UPF0248 family.

This Pyrococcus furiosus (strain ATCC 43587 / DSM 3638 / JCM 8422 / Vc1) protein is UPF0248 protein PF1300.